The sequence spans 1845 residues: Proteasome activator complex subunit 4 (1845 aa).

A compositionally biased stretch (basic and acidic residues) spans 1–13 (MEPAERAGGRDPL). The tract at residues 1–26 (MEPAERAGGRDPLEPGGRPGPDPQGF) is disordered. HEAT repeat units lie at residues 475–519 (PEGP…LVDC) and 1000–1039 (NFCCRDIIPLVLGFLRPDRQDVTQQQFKGALYCLLGNHSG). S1123 carries the post-translational modification Phosphoserine. HEAT repeat units lie at residues 1181-1219 (RVLPLRAIRFFVENLNHDAIVVRKMAISAVAGILKQLKR) and 1356-1394 (DAFLPVLKPHLERLVADSHESTQRCVAEIIAGLIRGSKH). A Phosphoserine modification is found at S1616. 2 HEAT repeats span residues 1638-1676 (PHQVPLVLQVLNQTARSSSWHARYTVLTYLQTMVFYNLF) and 1682-1720 (EDAVKDIRWLVISLLEDEQLEVREMAATTLSGLLQCNFL). Positions 1652–1740 (ARSSSWHARY…EQLCKTKLPK (89 aa)) are bromodomain-like (BRDL).

Belongs to the BLM10 family. Homodimer. Component of the spermatoproteasome, a form of the proteasome specifically found in testis. Interacts with the 20S and 26S proteasomes. In terms of processing, phosphorylated.

It localises to the cytoplasm. Its subcellular location is the cytosol. The protein resides in the nucleus. It is found in the nucleus speckle. In terms of biological role, associated component of the proteasome that specifically recognizes acetylated histones and promotes ATP- and ubiquitin-independent degradation of core histones during spermatogenesis and DNA damage response. Recognizes and binds acetylated histones via its bromodomain-like (BRDL) region and activates the proteasome by opening the gated channel for substrate entry. Binds to the core proteasome via its C-terminus, which occupies the same binding sites as the proteasomal ATPases, opening the closed structure of the proteasome via an active gating mechanism. Component of the spermatoproteasome, a form of the proteasome specifically found in testis: binds to acetylated histones and promotes degradation of histones, thereby participating actively to the exchange of histones during spermatogenesis. Also involved in DNA damage response in somatic cells, by promoting degradation of histones following DNA double-strand breaks. The protein is Proteasome activator complex subunit 4 (PSME4) of Bos taurus (Bovine).